A 319-amino-acid chain; its full sequence is Glutamyl-Q tRNA(Asp) synthetase (319 aa).

Residues arginine 23–serine 27 and glutamate 59 each bind L-glutamate. A 'HIGH' region motif is present at residues proline 26–serine 36. Residues cysteine 115, cysteine 117, tyrosine 139, and cysteine 143 each coordinate Zn(2+). The L-glutamate site is built by tyrosine 197 and arginine 215. Positions lysine 254 to glutamine 258 match the 'KMSKS' region motif. ATP is bound at residue lysine 257.

The protein belongs to the class-I aminoacyl-tRNA synthetase family. GluQ subfamily. It depends on Zn(2+) as a cofactor.

Catalyzes the tRNA-independent activation of glutamate in presence of ATP and the subsequent transfer of glutamate onto a tRNA(Asp). Glutamate is transferred on the 2-amino-5-(4,5-dihydroxy-2-cyclopenten-1-yl) moiety of the queuosine in the wobble position of the QUC anticodon. This chain is Glutamyl-Q tRNA(Asp) synthetase, found in Bordetella bronchiseptica (strain ATCC BAA-588 / NCTC 13252 / RB50) (Alcaligenes bronchisepticus).